Reading from the N-terminus, the 610-residue chain is Isocitrate dehydrogenase kinase/phosphatase (610 aa).

Residues 359–365 (APGFKGT) and lysine 380 each bind ATP. Aspartate 419 is an active-site residue.

It belongs to the AceK family.

Its subcellular location is the cytoplasm. The enzyme catalyses L-seryl-[isocitrate dehydrogenase] + ATP = O-phospho-L-seryl-[isocitrate dehydrogenase] + ADP + H(+). Functionally, bifunctional enzyme which can phosphorylate or dephosphorylate isocitrate dehydrogenase (IDH) on a specific serine residue. This is a regulatory mechanism which enables bacteria to bypass the Krebs cycle via the glyoxylate shunt in response to the source of carbon. When bacteria are grown on glucose, IDH is fully active and unphosphorylated, but when grown on acetate or ethanol, the activity of IDH declines drastically concomitant with its phosphorylation. This chain is Isocitrate dehydrogenase kinase/phosphatase, found in Rhodopseudomonas palustris (strain ATCC BAA-98 / CGA009).